A 157-amino-acid chain; its full sequence is RNA-binding protein 3 (157 aa).

The RRM domain maps to 6–84; the sequence is GKLFVGGLNF…RQIRVDHAGK (79 aa). Arg47 is modified (omega-N-methylarginine). Residues 81–157 are disordered; it reads HAGKSARGTR…GGNYRDNYDN (77 aa). Arg105 is subject to Asymmetric dimethylarginine; alternate. The residue at position 105 (Arg105) is a Dimethylated arginine; in A2780 ovarian carcinoma cell line. Omega-N-methylarginine; alternate is present on Arg105. Residues 105 to 114 are compositionally biased toward gly residues; the sequence is RGGGDQGYGS. Residues Arg121 and Arg131 each carry the omega-N-methylarginine modification. The residue at position 147 (Ser147) is a Phosphoserine. Tyr155 bears the Phosphotyrosine mark.

Interacts with RPL4. Associates with the 60S ribosomal subunits in an RNA-independent manner. Associates with ribosomes. In terms of processing, arg-105 is dimethylated, probably to asymmetric dimethylarginine. Post-translationally, phosphorylated.

It is found in the nucleus. Its subcellular location is the cytoplasm. It localises to the cell projection. The protein resides in the dendrite. Functionally, cold-inducible mRNA binding protein that enhances global protein synthesis at both physiological and mild hypothermic temperatures. Reduces the relative abundance of microRNAs, when overexpressed. Enhances phosphorylation of translation initiation factors and active polysome formation. This chain is RNA-binding protein 3 (RBM3), found in Homo sapiens (Human).